The chain runs to 207 residues: Small ribosomal subunit protein uS4c (207 aa).

The disordered stretch occupies residues 20–52 (GFSKKIDRNHTPPGQHGWKKKASDQKKSKESQY). The segment covering 40-52 (KASDQKKSKESQY) has biased composition (basic and acidic residues). Residues 97-158 (MRLDNIIYRL…NSQQLIKNYL (62 aa)) form the S4 RNA-binding domain.

The protein belongs to the universal ribosomal protein uS4 family. In terms of assembly, part of the 30S ribosomal subunit. Contacts protein S5. The interaction surface between S4 and S5 is involved in control of translational fidelity.

It is found in the plastid. Its function is as follows. One of the primary rRNA binding proteins, it binds directly to 16S rRNA where it nucleates assembly of the body of the 30S subunit. Functionally, with S5 and S12 plays an important role in translational accuracy. The sequence is that of Small ribosomal subunit protein uS4c (rps4) from Prototheca wickerhamii.